The following is a 152-amino-acid chain: Probable methionine-R-sulfoxide reductase B (152 aa).

The 125-residue stretch at 27-151 folds into the MsrB domain; it reads QTEWKSVLPN…NSVCMAFEKK (125 aa). Zn(2+)-binding residues include cysteine 66, cysteine 69, cysteine 116, and cysteine 119. Catalysis depends on cysteine 140, which acts as the Nucleophile.

The protein belongs to the MsrB Met sulfoxide reductase family. The cofactor is Zn(2+).

The enzyme catalyses L-methionyl-[protein] + [thioredoxin]-disulfide + H2O = L-methionyl-(R)-S-oxide-[protein] + [thioredoxin]-dithiol. Methionine-sulfoxide reductase that specifically reduces methionine (R)-sulfoxide back to methionine. While in many cases, methionine oxidation is the result of random oxidation following oxidative stress, methionine oxidation is also a post-translational modification that takes place on specific residue. This chain is Probable methionine-R-sulfoxide reductase B, found in Caenorhabditis elegans.